The sequence spans 122 residues: Small ribosomal subunit protein uS13 (122 aa).

The disordered stretch occupies residues 97-122; that stretch reads PVRGQRTHTNARTRKGPAKAIAGKKK.

The protein belongs to the universal ribosomal protein uS13 family. Part of the 30S ribosomal subunit. Forms a loose heterodimer with protein S19. Forms two bridges to the 50S subunit in the 70S ribosome.

Located at the top of the head of the 30S subunit, it contacts several helices of the 16S rRNA. In the 70S ribosome it contacts the 23S rRNA (bridge B1a) and protein L5 of the 50S subunit (bridge B1b), connecting the 2 subunits; these bridges are implicated in subunit movement. Contacts the tRNAs in the A and P-sites. The polypeptide is Small ribosomal subunit protein uS13 (Bartonella quintana (strain Toulouse) (Rochalimaea quintana)).